Consider the following 295-residue polypeptide: Bifunctional protein FolD (295 aa).

NADP(+)-binding positions include 166–168, Ser-191, and Ile-232; that span reads GRS.

The protein belongs to the tetrahydrofolate dehydrogenase/cyclohydrolase family. As to quaternary structure, homodimer.

The catalysed reaction is (6R)-5,10-methylene-5,6,7,8-tetrahydrofolate + NADP(+) = (6R)-5,10-methenyltetrahydrofolate + NADPH. It catalyses the reaction (6R)-5,10-methenyltetrahydrofolate + H2O = (6R)-10-formyltetrahydrofolate + H(+). It participates in one-carbon metabolism; tetrahydrofolate interconversion. In terms of biological role, catalyzes the oxidation of 5,10-methylenetetrahydrofolate to 5,10-methenyltetrahydrofolate and then the hydrolysis of 5,10-methenyltetrahydrofolate to 10-formyltetrahydrofolate. This Rhodopseudomonas palustris (strain ATCC BAA-98 / CGA009) protein is Bifunctional protein FolD.